We begin with the raw amino-acid sequence, 477 residues long: Shikimate biosynthesis protein AroDE (477 aa).

The segment at 1-209 (MLCATVSGPS…LEELLSYNYS (209 aa)) is 3-dehydroquinate dehydratase. Residues Ser21, 29–31 (ELR), and 56–58 (TFR) contribute to the 3-dehydroquinate site. His111 serves as the catalytic Proton donor/acceptor; for 3-dehydroquinate dehydratase activity. The active-site Schiff-base intermediate with substrate; for 3-dehydroquinate dehydratase activity is Lys134. 3-dehydroquinate contacts are provided by Arg172 and Gln197. Residues 210-477 (KLSEKSHIYG…NYVKNFMAKV (268 aa)) form a shikimate 5-dehydrogenase region. 228–230 (SIS) serves as a coordination point for shikimate. Residue Lys279 is the Proton acceptor; for shikimate dehydrogenase activity of the active site. Asn300 and Asp315 together coordinate shikimate. NADP(+) contacts are provided by residues 339–343 (GAGGA), 362–364 (NRT), and Gly438. Gln445 lines the shikimate pocket.

In the N-terminal section; belongs to the type-I 3-dehydroquinase family. This sequence in the C-terminal section; belongs to the shikimate dehydrogenase family.

It carries out the reaction 3-dehydroquinate = 3-dehydroshikimate + H2O. The enzyme catalyses shikimate + NADP(+) = 3-dehydroshikimate + NADPH + H(+). Its pathway is metabolic intermediate biosynthesis; chorismate biosynthesis; chorismate from D-erythrose 4-phosphate and phosphoenolpyruvate: step 3/7. The protein operates within metabolic intermediate biosynthesis; chorismate biosynthesis; chorismate from D-erythrose 4-phosphate and phosphoenolpyruvate: step 4/7. In terms of biological role, bifunctional enzyme that catalyzes two sequential steps of the aromatic amino acids biosynthetic pathway. In the first reaction, the AroD domain catalyzes the cis-dehydration of 3-dehydroquinate (DHQ) and introduces the first double bond of the aromatic ring to yield 3-dehydroshikimate; in the second reaction, the AroE domain catalyzes the reversible NADPH linked reduction of 3-dehydroshikimate (DHSA) to yield shikimate (SA). The chain is Shikimate biosynthesis protein AroDE from Chlamydia pneumoniae (Chlamydophila pneumoniae).